The sequence spans 417 residues: Gamma-glutamyl phosphate reductase (417 aa).

Belongs to the gamma-glutamyl phosphate reductase family.

The protein localises to the cytoplasm. The catalysed reaction is L-glutamate 5-semialdehyde + phosphate + NADP(+) = L-glutamyl 5-phosphate + NADPH + H(+). The protein operates within amino-acid biosynthesis; L-proline biosynthesis; L-glutamate 5-semialdehyde from L-glutamate: step 2/2. In terms of biological role, catalyzes the NADPH-dependent reduction of L-glutamate 5-phosphate into L-glutamate 5-semialdehyde and phosphate. The product spontaneously undergoes cyclization to form 1-pyrroline-5-carboxylate. The sequence is that of Gamma-glutamyl phosphate reductase from Idiomarina loihiensis (strain ATCC BAA-735 / DSM 15497 / L2-TR).